The following is an 846-amino-acid chain: MKMADRSGKIIPGQVYIEVEYDYEYEAKDRKIVIKQGERYILVKKTNDDWWQVKPDENSKAFYVPAQYVKEVTRKALMPPVKQVAGLPNNSTKIMQSLHLQRSTENVNKLPELSSFGKPSSSVQGTGLIRDANQNFGPSYNQGQTVNLSLDLTHNNGKFNNDSHSPKVSSQNRTRSFGHFPGPEFLDVEKTSFSQEQSCDSAGEGSERIHQDSESGDELSSSSTEQIRATTPPNQGRPDSPVYANLQELKISQSALPPLPGSPAIQINGEWETHKDSSGRCYYYNRGTQERTWKPPRWTRDASISKGDFQNPGDQELLSSEENYYSTSYSQSDSQCGSPPRGWSEELDERGHTLYTSDYTNEKWLKHVDDQGRQYYYSADGSRSEWELPKYNASSQQQREIIKSRSLDRRLQEPIVLTKWRHSTIVLDTNDKESPTASKPCFPENESSPSSPKHQDTASSPKDQEKYGLLNVTKIAENGKKVRKNWLSSWAVLQGSSLLFTKTQGSSTSWFGSNQSKPEFTVDLKGATIEMASKDKSSKKNVFELKTRQGTELLIQSDNDTVINDWFKVLSSTINNQAVETDEGIEEEIPDSPGIEKHDKEKEQKDPKKLRSFKVSSIDSSEQKKTKKNLKKFLTRRPTLQAVREKGYIKDQVFGSNLANLCQRENGTVPKFVKLCIEHVEEHGLDIDGIYRVSGNLAVIQKLRFAVNHDEKLDLNDSKWEDIHVITGALKMFFRELPEPLFTFNHFNDFVNAIKQEPRQRVAAVKDLIRQLPKPNQDTMQILFRHLRRVIENGEKNRMTYQSIAIVFGPTLLKPEKETGNIAVHTVYQNQIVELILLELSSIFGR.

The SH3 domain occupies 12–74; the sequence is PGQVYIEVEY…PAQYVKEVTR (63 aa). The span at 152–175 shows a compositional bias: polar residues; that stretch reads LTHNNGKFNNDSHSPKVSSQNRTR. A disordered region spans residues 152-241; the sequence is LTHNNGKFNN…PPNQGRPDSP (90 aa). A phosphoserine mark is found at serine 165 and serine 176. Polar residues predominate over residues 191 to 200; that stretch reads TSFSQEQSCD. Residues serine 201, serine 213, and serine 215 each carry the phosphoserine modification. A compositionally biased stretch (polar residues) spans 224–234; it reads TEQIRATTPPN. Phosphothreonine is present on residues threonine 230 and threonine 231. Serine 240 bears the Phosphoserine mark. Tyrosine 243 is subject to Phosphotyrosine. WW domains follow at residues 265–298 and 358–391; these read IQINGEWETHKDSSGRCYYYNRGTQERTWKPPRW and DYTNEKWLKHVDDQGRQYYYSADGSRSEWELPKY. The interval 293 to 316 is disordered; it reads WKPPRWTRDASISKGDFQNPGDQE. 2 disordered regions span residues 428–466 and 580–629; these read DTNDKESPTASKPCFPENESSPSSPKHQDTASSPKDQEK and ETDE…TKKN. The segment covering 445 to 461 has biased composition (polar residues); that stretch reads NESSPSSPKHQDTASSP. The PH domain maps to 463-575; the sequence is DQEKYGLLNV…WFKVLSSTIN (113 aa). The span at 580 to 590 shows a compositional bias: acidic residues; it reads ETDEGIEEEIP. Serine 592 is modified (phosphoserine). Residues 594 to 609 are compositionally biased toward basic and acidic residues; the sequence is GIEKHDKEKEQKDPKK. One can recognise a Rho-GAP domain in the interval 656–844; it reads SNLANLCQRE…LILLELSSIF (189 aa).

Its function is as follows. GTPase activator for the Rho-type GTPases by converting them to an inactive GDP-bound state. The protein is Rho GTPase-activating protein 12 (ARHGAP12) of Homo sapiens (Human).